The chain runs to 210 residues: Ribosomal RNA large subunit methyltransferase E (210 aa).

S-adenosyl-L-methionine-binding residues include G60, W62, D80, D96, and D122. Catalysis depends on K162, which acts as the Proton acceptor.

This sequence belongs to the class I-like SAM-binding methyltransferase superfamily. RNA methyltransferase RlmE family.

It is found in the cytoplasm. The catalysed reaction is uridine(2552) in 23S rRNA + S-adenosyl-L-methionine = 2'-O-methyluridine(2552) in 23S rRNA + S-adenosyl-L-homocysteine + H(+). Specifically methylates the uridine in position 2552 of 23S rRNA at the 2'-O position of the ribose in the fully assembled 50S ribosomal subunit. In Dichelobacter nodosus (strain VCS1703A), this protein is Ribosomal RNA large subunit methyltransferase E.